The sequence spans 142 residues: MAGIGPITQDWEPVVIRKRAPNAAAKRDEKTVNAARRSGADIETVRKFNAGSNKAASSGTSLNTKKLDDDTENLSHDRVPTELKKAIMQARGEKKLTQSQLAHLINEKPQVIQEYESGKAIPNQQILSKLERALGAKLRGKK.

A disordered region spans residues 49–75 (NAGSNKAASSGTSLNTKKLDDDTENLS). Positions 50–64 (AGSNKAASSGTSLNT) are enriched in polar residues. Over residues 65-75 (KKLDDDTENLS) the composition is skewed to basic and acidic residues. The HTH cro/C1-type domain occupies 87-141 (IMQARGEKKLTQSQLAHLINEKPQVIQEYESGKAIPNQQILSKLERALGAKLRGK). Residues 98–117 (QSQLAHLINEKPQVIQEYES) constitute a DNA-binding region (H-T-H motif).

It belongs to the MBF1 family. Expressed in leaves, roots, stems, petioles and shoots. Higher expression in flowers and siliques. Detected in leaf veins through development.

The protein localises to the nucleus. The protein resides in the nucleolus. Functionally, transcriptional coactivator that stimulates transcriptional activity by bridging regulatory proteins and TBP, thereby recruiting TBP to promoters occupied by DNA-binding regulators. In Arabidopsis thaliana (Mouse-ear cress), this protein is Multiprotein-bridging factor 1b (MBF1B).